The sequence spans 124 residues: Small ribosomal subunit protein uS12c (124 aa).

Residues 1–28 (MPTFQQLVRSARKPHAKKTKSPALQGCP) form a disordered region. The span at 10–20 (SARKPHAKKTK) shows a compositional bias: basic residues.

This sequence belongs to the universal ribosomal protein uS12 family. Part of the 30S ribosomal subunit.

The protein localises to the plastid. Functionally, with S4 and S5 plays an important role in translational accuracy. Located at the interface of the 30S and 50S subunits. The polypeptide is Small ribosomal subunit protein uS12c (rps12) (Prototheca wickerhamii).